The primary structure comprises 324 residues: Olfactory receptor 51D1 (324 aa).

At 1 to 38 (MQKPQLLVPIIATSNGNLVHAAYFLLVGIPGLGPTIHF) the chain is on the extracellular side. The helical transmembrane segment at 39 to 59 (WLAFPLCFMYALATLGNLTIV) threads the bilayer. Topologically, residues 60 to 67 (LIIRVERR) are cytoplasmic. The chain crosses the membrane as a helical span at residues 68-88 (LHEPMYLFLAMLSTIDLVLSS). Residues 89–112 (ITMPKMASLFLMGIQEIEFNICLA) are Extracellular-facing. An intrachain disulfide couples Cys-110 to Cys-202. The helical transmembrane segment at 113-133 (QMFLIHALSAVESAVLLAMAF) threads the bilayer. The Cytoplasmic portion of the chain corresponds to 134–152 (DRFVAICHPLRHASVLTGC). Residues 153–173 (TVAKIGLSALTRGFVFFFPLP) form a helical membrane-spanning segment. Residues 174 to 209 (FILKWLSYCQTHTVTHSFCLHQDIMKLSCTDTRVNV) lie on the Extracellular side of the membrane. The helical transmembrane segment at 210–230 (VYGLFIILSVMGVDSLFIGFS) threads the bilayer. Residues 231 to 250 (YILILWAVLELSSRRAALKA) are Cytoplasmic-facing. The helical transmembrane segment at 251-271 (FNTCISHLCAVLVFYVPLIGL) threads the bilayer. Residues 272-285 (SVVHRLGGPTSLLH) are Extracellular-facing. The helical transmembrane segment at 286-306 (VVMANTYLLLPPVVNPLVYGA) threads the bilayer. Residues 307 to 324 (KTKEICSRVLCMFSQGGK) are Cytoplasmic-facing.

The protein belongs to the G-protein coupled receptor 1 family.

The protein resides in the cell membrane. Functionally, odorant receptor. This chain is Olfactory receptor 51D1 (OR51D1), found in Homo sapiens (Human).